The sequence spans 538 residues: MESNDSGGVAAKHGFLFQDCVAAYHVTRMLRDKTIRSVRCEVTDDIDIVSDGYIDFVQVKSTGKTRWNISDIVQNSKGADKKTIPCSSILHKSMQCESDLSLGRRYSIVTEEKVNKTLEYLTISPNARLDKPGRQELIDDLNKRTDNFLTDSGISVSDWIDAATWEVFSSLRELELLGIKNIRLASQDLHGVILSSETVAEDIWCRILDTVTRKGEHSRRIHSADDKSYLRPDLLEWFKQRVEDDQSRSGRKIYVKRDLPHILTPFRAPMASVCAKRKGQVLHQQYSLKKYRYKHIADNVCQWLDEVFLRPKEMSDIHKLTFIEKRERLKNSVFKSLHDVSEFLGRVLLHATIRQHHESQPIPCMLYVEKAGAEKILENVHIVRRDPEGDQLWIGFSELVTDINIAVRLPEIRDQLYEDISDCIDTARKKILDIKDDNYLLRHDIDEILDGSQPFDAHLDRFTFVLFVGYDSNLLTEPETPGFEDDLEKETAVLFEKFAADLIEDSPFANLCIHVFIYPAPSLERLTQLVDEKVREVV.

Interacts with AbpB.

Functionally, part of an antiviral system composed of AbpA and AbpB; when both are expressed from a plasmid they confer resistance to phages T2, T4, T7 and lambda but not RB32 or RB69. Resistance is temperature dependent, it can be seen at 30 degrees Celsius but not at 37 or 42 degrees Celsius. The system impairs phage but not bacterial DNA synthesis (shown for T4, T7 and lambda). Partially suppressed by mutations in T4 gene 41, a replicative helicase. The protein is Anti-bacteriophage protein A of Escherichia coli (strain K12).